Consider the following 84-residue polypeptide: UPF0457 protein BCE33L2961 (84 aa).

Belongs to the UPF0457 family.

The polypeptide is UPF0457 protein BCE33L2961 (Bacillus cereus (strain ZK / E33L)).